We begin with the raw amino-acid sequence, 268 residues long: Imidazole glycerol phosphate synthase subunit HisF (268 aa).

Active-site residues include Asp12 and Asp131.

The protein belongs to the HisA/HisF family. Heterodimer of HisH and HisF.

The protein localises to the cytoplasm. The enzyme catalyses 5-[(5-phospho-1-deoxy-D-ribulos-1-ylimino)methylamino]-1-(5-phospho-beta-D-ribosyl)imidazole-4-carboxamide + L-glutamine = D-erythro-1-(imidazol-4-yl)glycerol 3-phosphate + 5-amino-1-(5-phospho-beta-D-ribosyl)imidazole-4-carboxamide + L-glutamate + H(+). It functions in the pathway amino-acid biosynthesis; L-histidine biosynthesis; L-histidine from 5-phospho-alpha-D-ribose 1-diphosphate: step 5/9. Its function is as follows. IGPS catalyzes the conversion of PRFAR and glutamine to IGP, AICAR and glutamate. The HisF subunit catalyzes the cyclization activity that produces IGP and AICAR from PRFAR using the ammonia provided by the HisH subunit. This is Imidazole glycerol phosphate synthase subunit HisF from Salinibacter ruber (strain DSM 13855 / M31).